The sequence spans 213 residues: Orotate phosphoribosyltransferase (213 aa).

Lys26 provides a ligand contact to 5-phospho-alpha-D-ribose 1-diphosphate. 34 to 35 provides a ligand contact to orotate; the sequence is FF. 5-phospho-alpha-D-ribose 1-diphosphate-binding positions include 72 to 73, Arg99, Lys100, Lys103, His105, and 124 to 132; these read YK and DDVITAGTA. Residues Thr128 and Arg156 each coordinate orotate.

The protein belongs to the purine/pyrimidine phosphoribosyltransferase family. PyrE subfamily. Homodimer. The cofactor is Mg(2+).

It catalyses the reaction orotidine 5'-phosphate + diphosphate = orotate + 5-phospho-alpha-D-ribose 1-diphosphate. It functions in the pathway pyrimidine metabolism; UMP biosynthesis via de novo pathway; UMP from orotate: step 1/2. Catalyzes the transfer of a ribosyl phosphate group from 5-phosphoribose 1-diphosphate to orotate, leading to the formation of orotidine monophosphate (OMP). The polypeptide is Orotate phosphoribosyltransferase (Pectobacterium carotovorum subsp. carotovorum (strain PC1)).